We begin with the raw amino-acid sequence, 828 residues long: Chitin synthase 7 (828 aa).

The next 6 helical transmembrane spans lie at 17–37 (VIVGLVMLAAVLEWFLWVAAF), 57–77 (AVVVAILFVGFRAVFLPIMVV), 95–115 (VGLQWFAFWAFAGLLTIPWLF), 444–464 (FMQNTIRTTALLFFIMVLAIL), 473–493 (LPVGFIAISLGLNWLMMIYFG), and 501–521 (IWLYPLMFVLNPFFNWWYMVY). Asparagine 615 carries an N-linked (GlcNAc...) asparagine glycan. 2 stretches are compositionally biased toward low complexity: residues 740-752 (SLVSLGSSASNSN) and 813-822 (SNNDPNNSNS). Disordered regions lie at residues 740–780 (SLVS…LGRA) and 793–828 (LEIGTSHGSSANRPALSRQASNNDPNNSNSGGHQQR). Asparagine 818 is a glycosylation site (N-linked (GlcNAc...) asparagine).

The protein belongs to the chitin synthase family. Class VII subfamily.

The protein localises to the membrane. The catalysed reaction is [(1-&gt;4)-N-acetyl-beta-D-glucosaminyl](n) + UDP-N-acetyl-alpha-D-glucosamine = [(1-&gt;4)-N-acetyl-beta-D-glucosaminyl](n+1) + UDP + H(+). Its function is as follows. Polymerizes chitin, a structural polymer of the cell wall and septum, by transferring the sugar moiety of UDP-GlcNAc to the non-reducing end of the growing chitin polymer. Required for normal appressorial chitin content and for the normal formation and function of these infection structures. The polypeptide is Chitin synthase 7 (Pyricularia oryzae (strain 70-15 / ATCC MYA-4617 / FGSC 8958) (Rice blast fungus)).